The sequence spans 293 residues: MANSKFEYVKQFEQPDSLLPNTWIVVRLDGRGFTKFSTKYAFEKPNDKRALDLMNAAARSVMSELPDITIAYGVSDEYSFVFHKSCTLFERRASKLVSTIVSTFTAYYIHHWPTYFVDGPPLSPPLPSFDGRAVCYPSVQNLRDYMSWRQVDCHINNLYNTTFWALINQGGMDGTAAELMLKGTFSADKNEILFKKFGINYNNEPEMFKKGSVVFRNYELVEPGTKKVSEEEAEEMSSSAVPEVKSKSQVEKDKKVRTKAKIVVEHLDIIRDEFWERRPWLLSGTPGKVPKEP.

Positions 29, 30, and 76 each coordinate Mg(2+). Residues 29–34 (DGRGFT) and 75–76 (SD) contribute to the GTP site. Residues 226-252 (KKVSEEEAEEMSSSAVPEVKSKSQVEK) form a disordered region.

The protein belongs to the tRNA(His) guanylyltransferase family. Requires Mg(2+) as cofactor.

It carries out the reaction a 5'-end ribonucleotide-tRNA(His) + GTP + ATP + H2O = a 5'-end phospho-guanosine-ribonucleotide-tRNA(His) + AMP + 2 diphosphate + H(+). Its function is as follows. Adds a GMP to the 5'-end of tRNA(His) after transcription and RNase P cleavage. The protein is tRNA(His) guanylyltransferase (rgt-1) of Neurospora crassa (strain ATCC 24698 / 74-OR23-1A / CBS 708.71 / DSM 1257 / FGSC 987).